Here is a 743-residue protein sequence, read N- to C-terminus: Extensin-2 (743 aa).

The first 22 residues, Met-1–Ala-22, serve as a signal peptide directing secretion. A disordered region spans residues Thr-46–Tyr-93. 2 stretches are compositionally biased toward pro residues: residues Pro-47–Thr-61 and Ser-70–Ser-86. A run of 47 repeats spans residues Ser-70–Ser-78, Ser-79–Lys-94, Ser-95–Ser-103, Ser-104–Lys-119, Ser-120–Asn-128, Ser-129–Lys-144, Ser-145–Ser-153, Ser-154–Lys-169, Ser-170–Ser-178, Ser-179–Lys-194, Ser-195–Ser-203, Ser-204–Lys-219, Ser-220–Ser-228, Ser-229–Lys-244, Ser-245–Ser-253, Ser-254–Lys-269, Ser-270–Ser-278, Ser-279–Lys-294, Ser-295–Ser-303, Ser-304–Lys-319, Ser-320–Ser-328, Ser-329–Lys-344, Ser-345–Ser-353, Ser-354–Lys-369, Ser-370–Ser-378, Ser-379–Lys-394, Ser-395–Ser-403, Ser-404–Lys-419, Ser-420–Ser-428, Ser-429–Lys-444, Ser-445–Ser-453, Ser-454–Lys-469, Ser-470–Ser-478, Ser-479–Lys-494, Ser-495–Ser-503, Ser-504–Lys-519, Ser-520–Ser-528, Ser-529–Lys-544, Ser-545–Ser-553, Ser-554–Lys-569, Ser-570–Asn-578, Ser-579–Lys-594, Ser-595–Ser-603, Ser-604–Lys-619, Ser-620–Ser-628, Ser-629–Lys-644, and Ser-645–Lys-660. A 23 X 9 AA repeats of S-P-P-P-P-Y-V-Y-[SN] region spans residues Ser-70–Ser-628. Residues Ser-79–Lys-660 form a 24 X 16 AA repeats of S-P-P-P-P-[YT]-Y-S-P-S-P-K-V-[DEYH]-Y-K region. The segment at Pro-715–Tyr-743 is disordered.

The protein belongs to the extensin family. In terms of processing, extensins contain a characteristic repeat of the pentapeptide Ser-Pro(4). The proline residues are hydroxylated and then O-glycosylated (arabinosylation). Synthetised as soluble proteins which become insolubilised in the cell wall through the intermolecular cross-linking of Tyr on adjacent monomers. Isodityrosine (IDT) stabilizes and makes rigid the part of the polypeptide where IDT functional sites are present. In terms of tissue distribution, predominantly expressed in the roots.

It localises to the secreted. It is found in the primary cell wall. Functionally, structural component which strengthens the primary cell wall. The chain is Extensin-2 from Arabidopsis thaliana (Mouse-ear cress).